We begin with the raw amino-acid sequence, 580 residues long: Protein DSE1 (580 aa).

WD repeat units follow at residues Glu-102–Gln-141, Gln-170–Lys-209, Val-222–Asn-261, Ala-333–His-370, and Gly-373–Gln-412. The tract at residues Val-497–Glu-534 is disordered. The segment covering Val-510–Phe-526 has biased composition (polar residues).

It belongs to the WD repeat DSE1 family.

In terms of biological role, involved in cell wall metabolism and required for the separation of the mother and daughter cells. This Kluyveromyces lactis (strain ATCC 8585 / CBS 2359 / DSM 70799 / NBRC 1267 / NRRL Y-1140 / WM37) (Yeast) protein is Protein DSE1 (DSE1).